We begin with the raw amino-acid sequence, 149 residues long: UPF0178 protein VC0395_A0405/VC395_0897 (149 aa).

This sequence belongs to the UPF0178 family.

The chain is UPF0178 protein VC0395_A0405/VC395_0897 from Vibrio cholerae serotype O1 (strain ATCC 39541 / Classical Ogawa 395 / O395).